A 68-amino-acid chain; its full sequence is Large ribosomal subunit protein bL33c (68 aa).

This sequence belongs to the bacterial ribosomal protein bL33 family.

It localises to the plastid. The protein localises to the chloroplast. The protein is Large ribosomal subunit protein bL33c of Amborella trichopoda.